The chain runs to 102 residues: Small ribosomal subunit protein uS10 (102 aa).

It belongs to the universal ribosomal protein uS10 family. As to quaternary structure, part of the 30S ribosomal subunit.

Functionally, involved in the binding of tRNA to the ribosomes. The polypeptide is Small ribosomal subunit protein uS10 (Mycoplasma capricolum subsp. capricolum (strain California kid / ATCC 27343 / NCTC 10154)).